A 216-amino-acid polypeptide reads, in one-letter code: Putative holocytochrome-c1 synthase (216 aa).

The segment at 1–46 (MQPEQLNQEEESKCPVPPEVRDAWLKSHGGKKPSEVHDTPHPTMLP) is disordered.

Belongs to the cytochrome c-type heme lyase family.

The protein resides in the mitochondrion inner membrane. The enzyme catalyses holo-[cytochrome c] = apo-[cytochrome c] + heme b. Its function is as follows. Lyase that catalyzes the covalent linking of the heme group to the cytochrome C1 apoprotein to produce the mature functional cytochrome. The chain is Putative holocytochrome-c1 synthase from Schizosaccharomyces pombe (strain 972 / ATCC 24843) (Fission yeast).